Consider the following 425-residue polypeptide: Glutamyl-tRNA(Gln) amidotransferase subunit D (425 aa).

The segment at 53 to 84 (ENNGEAANGGNGGKNGQKEPEPAKEKVSKPGL) is disordered. A compositionally biased stretch (basic and acidic residues) spans 68-80 (GQKEPEPAKEKVS). Positions 85–414 (PKVSILSTGG…EKAVSMLGEN (330 aa)) constitute an Asparaginase/glutaminase domain. Catalysis depends on residues Thr-95, Thr-171, Asp-172, and Lys-248.

The protein belongs to the asparaginase 1 family. GatD subfamily. Heterodimer of GatD and GatE.

It carries out the reaction L-glutamyl-tRNA(Gln) + L-glutamine + ATP + H2O = L-glutaminyl-tRNA(Gln) + L-glutamate + ADP + phosphate + H(+). Functionally, allows the formation of correctly charged Gln-tRNA(Gln) through the transamidation of misacylated Glu-tRNA(Gln) in organisms which lack glutaminyl-tRNA synthetase. The reaction takes place in the presence of glutamine and ATP through an activated gamma-phospho-Glu-tRNA(Gln). The GatDE system is specific for glutamate and does not act on aspartate. The chain is Glutamyl-tRNA(Gln) amidotransferase subunit D from Methanosarcina mazei (strain ATCC BAA-159 / DSM 3647 / Goe1 / Go1 / JCM 11833 / OCM 88) (Methanosarcina frisia).